A 388-amino-acid chain; its full sequence is Na(+)/H(+) antiporter NhaA (388 aa).

At 1 to 11 the chain is on the cytoplasmic side; that stretch reads MKHLHRFFSSD. A helical membrane pass occupies residues 12–31; it reads ASGGIILIIAAVLAMIMANS. Topologically, residues 32 to 58 are periplasmic; it reads GATSGWYHDFLETPVQLRVGTLEINKN. Residues 59–80 traverse the membrane as a helical segment; sequence MLLWINDALMAVFFLLVGLEVK. Residues 81 to 96 lie on the Cytoplasmic side of the membrane; the sequence is RELMQGSLASLRQAAF. A helical transmembrane segment spans residues 97–116; that stretch reads PVIAAIGGMIVPALLYLAFN. Topologically, residues 117–122 are periplasmic; it reads YADPIT. Residues 123 to 130 traverse the membrane as a helical segment; that stretch reads REGWAIPA. The Cytoplasmic portion of the chain corresponds to 131 to 154; it reads ATDIAFALGVLALLGSRVPLALKI. A helical transmembrane segment spans residues 155–176; sequence FLMALAIIDDLGAIIIIALFYT. Residues 177–180 are Periplasmic-facing; the sequence is NDLS. The chain crosses the membrane as a helical span at residues 181–200; that stretch reads MASLGVAAVAIAVLVVLNLC. Over 201–204 the chain is Cytoplasmic; it reads GVRR. A helical membrane pass occupies residues 205–222; that stretch reads TGVYILVGVVLWTAVLKS. Gly-223 is a topological domain (periplasmic). A helical transmembrane segment spans residues 224–236; it reads VHATLAGVIVGFF. At 237 to 253 the chain is on the cytoplasmic side; the sequence is IPLKEKHGRSPAKRLEH. A helical transmembrane segment spans residues 254 to 272; that stretch reads VLHPWVAYLILPLFAFANA. At 273 to 286 the chain is on the periplasmic side; that stretch reads GVSLQGVTLEGLTS. The helical transmembrane segment at 287 to 310 threads the bilayer; it reads ILPLGIIAGLLIGKPLGISLFCWL. Over 311–339 the chain is Cytoplasmic; it reads ALRLKLAHLPEGTTYQQIMAVGILCGIGF. A helical transmembrane segment spans residues 340 to 350; it reads TMSIFIASLAF. Topologically, residues 351 to 357 are periplasmic; the sequence is GSVDPEL. Residues 358–380 form a helical membrane-spanning segment; it reads INWAKLGILVGSISSAVIGYSWL. At 381–388 the chain is on the cytoplasmic side; that stretch reads RVRLRPSV.

The protein belongs to the NhaA Na(+)/H(+) (TC 2.A.33) antiporter family.

Its subcellular location is the cell inner membrane. The enzyme catalyses Na(+)(in) + 2 H(+)(out) = Na(+)(out) + 2 H(+)(in). Its function is as follows. Na(+)/H(+) antiporter that extrudes sodium in exchange for external protons. The sequence is that of Na(+)/H(+) antiporter NhaA from Escherichia coli O1:K1 / APEC.